A 248-amino-acid chain; its full sequence is Probable transcriptional regulatory protein Nwi_2729 (248 aa).

Positions 1 to 21 (MAGHSQFKNIMHRKGRQDAQK) are disordered.

It belongs to the TACO1 family.

It is found in the cytoplasm. The sequence is that of Probable transcriptional regulatory protein Nwi_2729 from Nitrobacter winogradskyi (strain ATCC 25391 / DSM 10237 / CIP 104748 / NCIMB 11846 / Nb-255).